The following is a 166-amino-acid chain: Cofilin-2 (166 aa).

Position 2 is an N-acetylalanine (alanine 2). At serine 3 the chain carries Phosphoserine. An ADF-H domain is found at 4–153 (GVTVNDEVIK…KDRSTLGEKL (150 aa)). Phosphothreonine is present on threonine 6. Residues 30-34 (KKRKK) carry the Nuclear localization signal motif.

This sequence belongs to the actin-binding proteins ADF family. The phosphorylation of Ser-24 may prevent recognition of the nuclear localization signal.

The protein resides in the nucleus matrix. It localises to the cytoplasm. It is found in the cytoskeleton. Functionally, controls reversibly actin polymerization and depolymerization in a pH-sensitive manner. It has the ability to bind G- and F-actin in a 1:1 ratio of cofilin to actin. It is the major component of intranuclear and cytoplasmic actin rods. In Bos taurus (Bovine), this protein is Cofilin-2 (CFL2).